The sequence spans 654 residues: Macrolide export ATP-binding/permease protein MacB (654 aa).

In terms of domain architecture, ABC transporter spans 6 to 244 (IELRGLRREF…RAGDAPTRQP (239 aa)). 42–49 (GASGSGKS) serves as a coordination point for ATP. The next 4 membrane-spanning stretches (helical) occupy residues 278-298 (FLTMLGIIIGIASVVFVVAVG), 527-547 (LTLMIAAIAVISLVVGGIGVM), 584-604 (VVCLIGGGLGVGVAFGLAALF), and 619-639 (SIAAAFVCSTGIGIVFGYLPA).

This sequence belongs to the ABC transporter superfamily. Macrolide exporter (TC 3.A.1.122) family. As to quaternary structure, homodimer.

The protein localises to the cell inner membrane. In terms of biological role, non-canonical ABC transporter that contains transmembrane domains (TMD), which form a pore in the inner membrane, and an ATP-binding domain (NBD), which is responsible for energy generation. Confers resistance against macrolides. This chain is Macrolide export ATP-binding/permease protein MacB, found in Rhodopseudomonas palustris (strain HaA2).